Reading from the N-terminus, the 219-residue chain is MNQLEMKKLAAQAALEYVTADTIVGVGSGSTVNCFIEALGTIKNKIQGVVAASKASEELLRKQGIEVFNANDVSSLDIYVDGADEINPQKMMIKGGGAALTREKIVAALAKKFICIVDSSKQVDVLGSTFPLPVEVIPMARSQVGRKLVALGGAPEYREGVVTDNGNVILDVHNFSILNPVEMEKELNNVAGVVTNGIFALRGADVVIVGTPEGAKIID.

Substrate contacts are provided by residues 28 to 31, 81 to 84, and 94 to 97; these read SGST, DGAD, and KGGG. The active-site Proton acceptor is glutamate 103. Lysine 121 contributes to the substrate binding site.

Belongs to the ribose 5-phosphate isomerase family. Homodimer.

The enzyme catalyses aldehydo-D-ribose 5-phosphate = D-ribulose 5-phosphate. The protein operates within carbohydrate degradation; pentose phosphate pathway; D-ribose 5-phosphate from D-ribulose 5-phosphate (non-oxidative stage): step 1/1. Its function is as follows. Catalyzes the reversible conversion of ribose-5-phosphate to ribulose 5-phosphate. This chain is Ribose-5-phosphate isomerase A, found in Haemophilus influenzae (strain 86-028NP).